The following is a 279-amino-acid chain: Shikimate dehydrogenase (NADP(+)) (279 aa).

Shikimate contacts are provided by residues 14 to 16 and Thr62; that span reads SLS. Residue Lys66 is the Proton acceptor of the active site. 2 residues coordinate shikimate: Asn87 and Asp103. NADP(+)-binding positions include 127–131, 151–156, and Met215; these read GAGGA and NRTKAK. Tyr217 is a binding site for shikimate. An NADP(+)-binding site is contributed by Gly239.

This sequence belongs to the shikimate dehydrogenase family. As to quaternary structure, homodimer.

It carries out the reaction shikimate + NADP(+) = 3-dehydroshikimate + NADPH + H(+). The protein operates within metabolic intermediate biosynthesis; chorismate biosynthesis; chorismate from D-erythrose 4-phosphate and phosphoenolpyruvate: step 4/7. In terms of biological role, involved in the biosynthesis of the chorismate, which leads to the biosynthesis of aromatic amino acids. Catalyzes the reversible NADPH linked reduction of 3-dehydroshikimate (DHSA) to yield shikimate (SA). In Alteromonas mediterranea (strain DSM 17117 / CIP 110805 / LMG 28347 / Deep ecotype), this protein is Shikimate dehydrogenase (NADP(+)).